Consider the following 476-residue polypeptide: NAC domain-containing protein 86 (476 aa).

Residues 6–157 enclose the NAC domain; sequence LPPGFRFHPT…AYALCRVFKK (152 aa). Residues 105 to 163 mediate DNA binding; sequence IGTKKTLVYYRGRAPHGIRTGWVMHEYRLDESECEPSAFGMQDAYALCRVFKKIVIEAK.

In terms of tissue distribution, expressed in a few sieve element cells before enucleation and in phloem-pole pericycle cells.

The protein localises to the nucleus. In terms of biological role, transcription factor directing sieve element enucleation and cytosol degradation. Not required for formation of lytic vacuoles. Regulates, with NAC045, the transcription of NEN1, NEN2, NEN3, NEN4, RTM1, RTM2, UBP16, PLDZETA, ABCB10 and At1g26450. The polypeptide is NAC domain-containing protein 86 (Arabidopsis thaliana (Mouse-ear cress)).